A 496-amino-acid polypeptide reads, in one-letter code: Glycine receptor subunit beta (496 aa).

The first 22 residues, 1–22 (MKFSLAVSFFILMSLLFEDACS), serve as a signal peptide directing secretion. Residues 23–268 (KEKSSKKGKG…IFTLRRQVGF (246 aa)) are Extracellular-facing. The N-linked (GlcNAc...) asparagine glycan is linked to asparagine 54. Arginine 108 and serine 174 together coordinate glycine. A disulfide bridge links cysteine 183 with cysteine 197. N-linked (GlcNAc...) asparagine glycosylation occurs at asparagine 242. An intrachain disulfide couples cysteine 243 to cysteine 255. Residue threonine 250 coordinates glycine. A helical transmembrane segment spans residues 269–289 (YMMGVYAPTLLIVVLSWLSFW). The Cytoplasmic portion of the chain corresponds to 290-294 (INPDA). The helical transmembrane segment at 295–315 (SAARVPLGIFSVLSLASECTT) threads the bilayer. Over 316–327 (LAAELPKVSYVK) the chain is Extracellular. Residues 328 to 349 (ALDVWLIACLLFGFASLVEYAV) traverse the membrane as a helical segment. The Cytoplasmic portion of the chain corresponds to 350-471 (VQVMLNNPKR…KPVIPTAAKR (122 aa)). A Phosphothreonine modification is found at threonine 391. Residues 472-495 (IDLYARALFPFCFLFFNVIYWSIY) form a helical membrane-spanning segment. Position 496 (leucine 496) is a topological domain, extracellular.

This sequence belongs to the ligand-gated ion channel (TC 1.A.9) family. Glycine receptor (TC 1.A.9.3) subfamily. GLRB sub-subfamily. In terms of assembly, forms heteropentamers with glycin receptor alpha subunits. Heteropentamers with GLRA1 can be composed of two GLRA1 and three GLRB subunits, or three GLRA1 and two GLRB subunits, or four GLRA1 subunits and one GLRB subunit. Forms heteropentamers with GLRA2. Functional GLRB-GLRA2 heteropentamers contain four GLRA2 subunits and one GLRB subunit, although alternative subunit composition cannot be excluded. Forms a heteropentamer with GLRA3. Interacts with GPHN. Detected in spinal cord and brain stem (at protein level). Detected in spinal cord, cerebellum and brain cortex.

Its subcellular location is the postsynaptic cell membrane. It localises to the cell membrane. The protein resides in the synapse. The protein localises to the perikaryon. It is found in the cell projection. Its subcellular location is the dendrite. It localises to the cytoplasm. The enzyme catalyses chloride(in) = chloride(out). Its activity is regulated as follows. Channel opening is triggered by extracellular glycine. Heteropentameric channels composed of GLRB and GLRA1 are activated by lower glycine levels than homopentameric GLRA1. Its function is as follows. Subunit of heteromeric glycine-gated chloride channels. Plays an important role in the down-regulation of neuronal excitability. Contributes to the generation of inhibitory postsynaptic currents. This Rattus norvegicus (Rat) protein is Glycine receptor subunit beta (Glrb).